A 611-amino-acid chain; its full sequence is Threonine--tRNA ligase (611 aa).

Residues 1–145 are editing domain; that stretch reads MRLLLIHSDH…TILPGEGAAA (145 aa). Residues 195–487 form a catalytic region; it reads VHVDLMRAKE…TAAQEVPSFP (293 aa). The Zn(2+) site is built by Cys-287, His-339, and His-460.

It belongs to the class-II aminoacyl-tRNA synthetase family. As to quaternary structure, homodimer. It depends on Zn(2+) as a cofactor.

The protein resides in the cytoplasm. The enzyme catalyses tRNA(Thr) + L-threonine + ATP = L-threonyl-tRNA(Thr) + AMP + diphosphate + H(+). Catalyzes the attachment of threonine to tRNA(Thr) in a two-step reaction: L-threonine is first activated by ATP to form Thr-AMP and then transferred to the acceptor end of tRNA(Thr). Also edits incorrectly charged L-seryl-tRNA(Thr). The chain is Threonine--tRNA ligase from Methanoculleus marisnigri (strain ATCC 35101 / DSM 1498 / JR1).